Consider the following 177-residue polypeptide: NADH-quinone oxidoreductase subunit B (177 aa).

Residues Cys56, Cys57, Cys121, and Cys151 each coordinate [4Fe-4S] cluster.

This sequence belongs to the complex I 20 kDa subunit family. As to quaternary structure, NDH-1 is composed of 14 different subunits. Subunits NuoB, C, D, E, F, and G constitute the peripheral sector of the complex. [4Fe-4S] cluster serves as cofactor.

The protein localises to the cell inner membrane. The enzyme catalyses a quinone + NADH + 5 H(+)(in) = a quinol + NAD(+) + 4 H(+)(out). Functionally, NDH-1 shuttles electrons from NADH, via FMN and iron-sulfur (Fe-S) centers, to quinones in the respiratory chain. Couples the redox reaction to proton translocation (for every two electrons transferred, four hydrogen ions are translocated across the cytoplasmic membrane), and thus conserves the redox energy in a proton gradient. The chain is NADH-quinone oxidoreductase subunit B from Jannaschia sp. (strain CCS1).